Consider the following 375-residue polypeptide: DNA replication and repair protein RecF (375 aa).

30 to 37 (GNNAQGKS) provides a ligand contact to ATP.

It belongs to the RecF family.

The protein localises to the cytoplasm. Functionally, the RecF protein is involved in DNA metabolism; it is required for DNA replication and normal SOS inducibility. RecF binds preferentially to single-stranded, linear DNA. It also seems to bind ATP. This is DNA replication and repair protein RecF from Microcystis aeruginosa (strain NIES-843 / IAM M-2473).